The primary structure comprises 60 residues: Cytotoxin 5 (60 aa).

Intrachain disulfides connect C3-C21, C14-C38, C42-C53, and C54-C59.

This sequence belongs to the three-finger toxin family. Short-chain subfamily. Type IA cytotoxin sub-subfamily. Monomer in solution; Homodimer and oligomer in the presence of negatively charged lipids forming a pore with a size ranging between 20 and 30 Angstroms. As to expression, expressed by the venom gland.

It is found in the secreted. The protein localises to the target cell membrane. Its function is as follows. Shows cytolytic activity on many different cells by forming pore in lipid membranes. In vivo, increases heart rate or kills the animal by cardiac arrest. In addition, it binds to heparin with high affinity, interacts with Kv channel-interacting protein 1 (KCNIP1) in a calcium-independent manner, and binds to integrin alpha-V/beta-3 (ITGAV/ITGB3) with moderate affinity. This is Cytotoxin 5 from Naja haje haje (Egyptian cobra).